A 341-amino-acid polypeptide reads, in one-letter code: tRNA N6-adenosine threonylcarbamoyltransferase (341 aa).

The Fe cation site is built by His112 and His116. Residues 134–138 (LASGG), Asp167, Gly180, and Asn279 contribute to the substrate site. A Fe cation-binding site is contributed by Asp307.

The protein belongs to the KAE1 / TsaD family. Requires Fe(2+) as cofactor.

It is found in the cytoplasm. The enzyme catalyses L-threonylcarbamoyladenylate + adenosine(37) in tRNA = N(6)-L-threonylcarbamoyladenosine(37) in tRNA + AMP + H(+). Required for the formation of a threonylcarbamoyl group on adenosine at position 37 (t(6)A37) in tRNAs that read codons beginning with adenine. Is involved in the transfer of the threonylcarbamoyl moiety of threonylcarbamoyl-AMP (TC-AMP) to the N6 group of A37, together with TsaE and TsaB. TsaD likely plays a direct catalytic role in this reaction. This is tRNA N6-adenosine threonylcarbamoyltransferase from Rickettsia bellii (strain OSU 85-389).